Reading from the N-terminus, the 452-residue chain is UDP-N-acetylmuramoyl-L-alanine--L-glutamate ligase (452 aa).

Position 118–124 (glycine 118–threonine 124) interacts with ATP.

The protein belongs to the MurCDEF family. MurD2 subfamily.

It localises to the cytoplasm. It catalyses the reaction UDP-N-acetyl-alpha-D-muramoyl-L-alanine + L-glutamate + ATP = UDP-N-acetyl-alpha-D-muramoyl-L-alanyl-L-glutamate + ADP + phosphate + H(+). It participates in cell wall biogenesis; peptidoglycan biosynthesis. In terms of biological role, cell wall formation. Catalyzes the addition of L-glutamate to the nucleotide precursor UDP-N-acetylmuramoyl-L-alanine. This chain is UDP-N-acetylmuramoyl-L-alanine--L-glutamate ligase, found in Micromonospora sp. (strain ATCC 39149 / NRRL 15099 / SCC 1413).